The sequence spans 481 residues: Thiol protease (481 aa).

The Calpain catalytic domain occupies Asp-169–Tyr-481. Catalysis depends on residues Cys-229, His-406, and Asn-426.

This sequence belongs to the peptidase C2 family.

Its activity is regulated as follows. Inactive below 20 degrees Celsius and pH 6.0. Inhibited by divalent cations. Its function is as follows. Thiol protease. Probably an important virulence factor. This Porphyromonas gingivalis (strain ATCC BAA-308 / W83) protein is Thiol protease (tpr).